The chain runs to 330 residues: Tryptophan--tRNA ligase (330 aa).

Residues 10–12 and 18–19 each bind ATP; these read QTT and GN. The 'HIGH' region signature appears at 11 to 19; the sequence is TTGALHLGN. An L-tryptophan-binding site is contributed by Asp-134. Residues 146 to 148, Ile-186, and 195 to 199 each bind ATP; these read GED and KMSKS. The short motif at 195–199 is the 'KMSKS' region element; sequence KMSKS.

It belongs to the class-I aminoacyl-tRNA synthetase family. Homodimer.

It is found in the cytoplasm. The catalysed reaction is tRNA(Trp) + L-tryptophan + ATP = L-tryptophyl-tRNA(Trp) + AMP + diphosphate + H(+). Catalyzes the attachment of tryptophan to tRNA(Trp). The polypeptide is Tryptophan--tRNA ligase (Rickettsia typhi (strain ATCC VR-144 / Wilmington)).